Consider the following 152-residue polypeptide: Large ribosomal subunit protein uL15 (152 aa).

The protein belongs to the universal ribosomal protein uL15 family. In terms of assembly, part of the 50S ribosomal subunit.

In terms of biological role, binds to the 23S rRNA. This is Large ribosomal subunit protein uL15 from Staphylothermus marinus (strain ATCC 43588 / DSM 3639 / JCM 9404 / F1).